The primary structure comprises 312 residues: Transcription factor Ouib (312 aa).

The ZAD domain occupies 4-79 (IVCRVCGRQK…IKTQTKWLTI (76 aa)). Zn(2+) is bound by residues Cys-6, Cys-9, Cys-52, and Cys-55. 5 C2H2-type zinc fingers span residues 167–189 (YICELCGTHATSKPTFQRHMRKH), 195–217 (FGCKDCDARFLSAGELRAHHRVH), 223–245 (FACRFCEKRYVSYMGRLIHERTH), 251–273 (YVCEECGKKFTTAYVLKNHMVIH), and 279–303 (FRCDICDRSFQRKAHLVTHTRSMMH).

In terms of tissue distribution, expressed predominantly in the prothoracic gland during embryonic and larval development.

It is found in the nucleus. Its function is as follows. Transcription factor required for ecdysteroid production in the prothoracic gland by activating transcription of the ecdysteroid biosynthesis gene spok. Binds to the 5'-AGCTTTATTATTTAG-3' DNA sequence in the spok enhancer region. The chain is Transcription factor Ouib from Drosophila melanogaster (Fruit fly).